A 533-amino-acid polypeptide reads, in one-letter code: CTP synthase (533 aa).

The interval 1–265 (MTKFIFVTGG…ARYLVRRLGL (265 aa)) is amidoligase domain. S13 is a CTP binding site. S13 is a UTP binding site. Position 14–19 (14–19 (GLGKGI)) interacts with ATP. Y54 contributes to the L-glutamine binding site. Residue D71 participates in ATP binding. 2 residues coordinate Mg(2+): D71 and E139. Residues 146–148 (DIE), 186–191 (KTKPTQ), and K222 contribute to the CTP site. Residues 186-191 (KTKPTQ) and K222 contribute to the UTP site. Positions 290 to 532 (EIAIVGKYVK…VRAARERKYG (243 aa)) constitute a Glutamine amidotransferase type-1 domain. G351 provides a ligand contact to L-glutamine. C378 acts as the Nucleophile; for glutamine hydrolysis in catalysis. L-glutamine contacts are provided by residues 379–382 (FGFQ), E402, and R459. Active-site residues include H505 and E507.

It belongs to the CTP synthase family. As to quaternary structure, homotetramer.

The enzyme catalyses UTP + L-glutamine + ATP + H2O = CTP + L-glutamate + ADP + phosphate + 2 H(+). The catalysed reaction is L-glutamine + H2O = L-glutamate + NH4(+). It catalyses the reaction UTP + NH4(+) + ATP = CTP + ADP + phosphate + 2 H(+). It functions in the pathway pyrimidine metabolism; CTP biosynthesis via de novo pathway; CTP from UDP: step 2/2. With respect to regulation, allosterically activated by GTP, when glutamine is the substrate; GTP has no effect on the reaction when ammonia is the substrate. The allosteric effector GTP functions by stabilizing the protein conformation that binds the tetrahedral intermediate(s) formed during glutamine hydrolysis. Inhibited by the product CTP, via allosteric rather than competitive inhibition. In terms of biological role, catalyzes the ATP-dependent amination of UTP to CTP with either L-glutamine or ammonia as the source of nitrogen. Regulates intracellular CTP levels through interactions with the four ribonucleotide triphosphates. This Thermococcus gammatolerans (strain DSM 15229 / JCM 11827 / EJ3) protein is CTP synthase.